The following is a 190-amino-acid chain: E3 ubiquitin-protein ligase RNF4 (190 aa).

Residues 1–16 (MSTRKRRGGAINSRQA) are required for ubiquitination activity. Residues 1–29 (MSTRKRRGGAINSRQAQKRTREATSTPEI) form a disordered region. A mediates interaction with TRPS1 region spans residues 4–61 (RKRRGGAINSRQAQKRTREATSTPEISLEAEPIELVETAGDEIVDLTCESLEPVVVDL). 4 consecutive short sequence motifs (SUMO interaction motif) follow at residues 36–39 (IELV), 46–49 (IVDL), 57–59 (VVV), and 67–70 (VVIV). Phosphoserine is present on residues serine 94 and serine 95. Positions 132, 135, 154, 156, 159, 162, 173, and 176 each coordinate Zn(2+). The RING-type zinc finger occupies 132–177 (CPICMDGYSEIVQNGRLIVSTECGHVFCSQCLRDSLKNANTCPTCR).

As to quaternary structure, homodimer (via RING-type zinc finger domain). Interacts with GSC2. Interacts with AR/the androgen receptor and TBP. Interacts with TCF20. Interacts with PATZ1. Interacts with TRPS1; negatively regulates TRPS1 transcriptional repressor activity. Interacts with PML (isoform PML-1, isoform PML-2, isoform PML-3, isoform PML-4, isoform PML-5 and isoform PML-6). Interacts with PRDM1/Blimp-1. In terms of processing, sumoylated; conjugated by one or two SUMO1 moieties. Autoubiquitinated. Widely expressed at low levels in many tissues; highly expressed in testis.

It is found in the cytoplasm. It localises to the nucleus. The protein resides in the PML body. It catalyses the reaction S-ubiquitinyl-[E2 ubiquitin-conjugating enzyme]-L-cysteine + [acceptor protein]-L-lysine = [E2 ubiquitin-conjugating enzyme]-L-cysteine + N(6)-ubiquitinyl-[acceptor protein]-L-lysine.. It participates in protein modification; protein ubiquitination. E3 ubiquitin-protein ligase which binds polysumoylated chains covalently attached to proteins and mediates 'Lys-6'-, 'Lys-11'-, 'Lys-48'- and 'Lys-63'-linked polyubiquitination of those substrates and their subsequent targeting to the proteasome for degradation. Regulates the degradation of several proteins including PML and the transcriptional activator PEA3. Involved in chromosome alignment and spindle assembly, it regulates the kinetochore CENPH-CENPI-CENPK complex by targeting polysumoylated CENPI to proteasomal degradation. Regulates the cellular responses to hypoxia and heat shock through degradation of respectively EPAS1 and PARP1. Alternatively, it may also bind DNA/nucleosomes and have a more direct role in the regulation of transcription for instance enhancing basal transcription and steroid receptor-mediated transcriptional activation. Catalyzes ubiquitination of sumoylated PARP1 in response to PARP1 trapping to chromatin, leading to PARP1 removal from chromatin by VCP/p97. The polypeptide is E3 ubiquitin-protein ligase RNF4 (Homo sapiens (Human)).